Reading from the N-terminus, the 503-residue chain is Aspartyl/glutamyl-tRNA(Asn/Gln) amidotransferase subunit B (503 aa).

It belongs to the GatB/GatE family. GatB subfamily. As to quaternary structure, heterotrimer of A, B and C subunits.

The catalysed reaction is L-glutamyl-tRNA(Gln) + L-glutamine + ATP + H2O = L-glutaminyl-tRNA(Gln) + L-glutamate + ADP + phosphate + H(+). It carries out the reaction L-aspartyl-tRNA(Asn) + L-glutamine + ATP + H2O = L-asparaginyl-tRNA(Asn) + L-glutamate + ADP + phosphate + 2 H(+). Functionally, allows the formation of correctly charged Asn-tRNA(Asn) or Gln-tRNA(Gln) through the transamidation of misacylated Asp-tRNA(Asn) or Glu-tRNA(Gln) in organisms which lack either or both of asparaginyl-tRNA or glutaminyl-tRNA synthetases. The reaction takes place in the presence of glutamine and ATP through an activated phospho-Asp-tRNA(Asn) or phospho-Glu-tRNA(Gln). This chain is Aspartyl/glutamyl-tRNA(Asn/Gln) amidotransferase subunit B, found in Cereibacter sphaeroides (strain ATCC 17025 / ATH 2.4.3) (Rhodobacter sphaeroides).